Reading from the N-terminus, the 292-residue chain is Nucleotide-binding protein Ldb0621 (292 aa).

14–21 (GMSGAGKT) is a binding site for ATP. 64–67 (DLRV) serves as a coordination point for GTP.

The protein belongs to the RapZ-like family.

Functionally, displays ATPase and GTPase activities. The protein is Nucleotide-binding protein Ldb0621 of Lactobacillus delbrueckii subsp. bulgaricus (strain ATCC 11842 / DSM 20081 / BCRC 10696 / JCM 1002 / NBRC 13953 / NCIMB 11778 / NCTC 12712 / WDCM 00102 / Lb 14).